We begin with the raw amino-acid sequence, 1532 residues long: Glycogen debranching enzyme (1532 aa).

S64 is modified (phosphoserine). Active-site residues include D526, H529, and D627.

Belongs to the glycogen debranching enzyme family. In terms of assembly, monomer. Interacts with NHLRC1/malin. In terms of processing, the N-terminus is blocked. Post-translationally, ubiquitinated. Liver, kidney and lymphoblastoid cells express predominantly isoform 1; whereas muscle and heart express not only isoform 1, but also muscle-specific isoform mRNAs (isoforms 2, 3 and 4). Isoforms 5 and 6 are present in both liver and muscle.

The protein resides in the cytoplasm. It catalyses the reaction Transfers a segment of a (1-&gt;4)-alpha-D-glucan to a new position in an acceptor, which may be glucose or a (1-&gt;4)-alpha-D-glucan.. The enzyme catalyses Hydrolysis of (1-&gt;6)-alpha-D-glucosidic branch linkages in glycogen phosphorylase limit dextrin.. Functionally, multifunctional enzyme acting as 1,4-alpha-D-glucan:1,4-alpha-D-glucan 4-alpha-D-glycosyltransferase and amylo-1,6-glucosidase in glycogen degradation. The protein is Glycogen debranching enzyme (AGL) of Homo sapiens (Human).